The primary structure comprises 298 residues: Elongation factor Ts (298 aa).

The tract at residues 79-82 (TDFV) is involved in Mg(2+) ion dislocation from EF-Tu.

It belongs to the EF-Ts family.

It is found in the cytoplasm. In terms of biological role, associates with the EF-Tu.GDP complex and induces the exchange of GDP to GTP. It remains bound to the aminoacyl-tRNA.EF-Tu.GTP complex up to the GTP hydrolysis stage on the ribosome. The sequence is that of Elongation factor Ts (tsf) from Mycoplasma genitalium (strain ATCC 33530 / DSM 19775 / NCTC 10195 / G37) (Mycoplasmoides genitalium).